A 421-amino-acid chain; its full sequence is UDP-N-acetylglucosamine 1-carboxyvinyltransferase (421 aa).

Phosphoenolpyruvate is bound at residue 22–23 (KN). Residue Arg-93 coordinates UDP-N-acetyl-alpha-D-glucosamine. Catalysis depends on Cys-117, which acts as the Proton donor. Residue Cys-117 is modified to 2-(S-cysteinyl)pyruvic acid O-phosphothioketal. Residues 122–126 (RPVDL), Asp-308, and Ile-330 each bind UDP-N-acetyl-alpha-D-glucosamine.

This sequence belongs to the EPSP synthase family. MurA subfamily.

It is found in the cytoplasm. The catalysed reaction is phosphoenolpyruvate + UDP-N-acetyl-alpha-D-glucosamine = UDP-N-acetyl-3-O-(1-carboxyvinyl)-alpha-D-glucosamine + phosphate. It participates in cell wall biogenesis; peptidoglycan biosynthesis. Its function is as follows. Cell wall formation. Adds enolpyruvyl to UDP-N-acetylglucosamine. This chain is UDP-N-acetylglucosamine 1-carboxyvinyltransferase, found in Pseudomonas entomophila (strain L48).